Here is a 393-residue protein sequence, read N- to C-terminus: MGVLGLSKLLYDRTPGAIKEQELKVYFGRRIAIDASMAVYQFVIAMKGFQEGQSVELTNEAGDVTSHLSGIFFRTLRMIDEGLRPIYVFDGKPPTLKASELESRRQRAEDAKHEFEKAKEEGDDEAMEKMSKRMVRVGRDQMEEVKTLLRLMGIPVVQAPSEAEAQCAELVKKNKAWAVGTEDMDALAFGSRVMLRHLTYGEAKKRPIAEYHLDEILEASGFSMQQFIDLCILLGCDYVPRISGIGPHKAWEGIKKYGSLEAFIESLDGTRYVVPEEFNYKDARNFFLEPEVTPGEEIDIQFREPDEEGLIKFLVDEKLFSKERVLKGIQRLRDALTKKTQGRLDQFFTITKPQKQVNSEASTAGTKRNRGAVALPGVLQRKSSSGHKKAVKK.

Positions 1 to 108 (MGVLGLSKLL…SELESRRQRA (108 aa)) are N-domain. Asp-34 lines the Mg(2+) pocket. Arg-74 lines the DNA pocket. Asp-90 lines the Mg(2+) pocket. The segment covering 99–120 (SELESRRQRAEDAKHEFEKAKE) has biased composition (basic and acidic residues). A disordered region spans residues 99–127 (SELESRRQRAEDAKHEFEKAKEEGDDEAM). The segment at 126-257 (AMEKMSKRMV…HKAWEGIKKY (132 aa)) is I-domain. Mg(2+) is bound by residues Glu-162, Glu-164, Asp-183, and Asp-185. A DNA-binding site is contributed by Glu-162. 2 residues coordinate DNA: Gly-235 and Asp-237. A Mg(2+)-binding site is contributed by Asp-237. Residues 340–348 (TQGRLDQFF) form an interaction with PCNA region. Residues 358 to 393 (NSEASTAGTKRNRGAVALPGVLQRKSSSGHKKAVKK) form a disordered region. The span at 384–393 (SSGHKKAVKK) shows a compositional bias: basic residues.

Belongs to the XPG/RAD2 endonuclease family. FEN1 subfamily. As to quaternary structure, interacts with PCNA. Three molecules of FEN1 bind to one PCNA trimer with each molecule binding to one PCNA monomer. PCNA stimulates the nuclease activity without altering cleavage specificity. The cofactor is Mg(2+). In terms of processing, phosphorylated. Phosphorylation upon DNA damage induces relocalization to the nuclear plasma.

It is found in the nucleus. The protein localises to the nucleolus. The protein resides in the nucleoplasm. Its subcellular location is the mitochondrion. Its function is as follows. Structure-specific nuclease with 5'-flap endonuclease and 5'-3' exonuclease activities involved in DNA replication and repair. During DNA replication, cleaves the 5'-overhanging flap structure that is generated by displacement synthesis when DNA polymerase encounters the 5'-end of a downstream Okazaki fragment. It enters the flap from the 5'-end and then tracks to cleave the flap base, leaving a nick for ligation. Also involved in the long patch base excision repair (LP-BER) pathway, by cleaving within the apurinic/apyrimidinic (AP) site-terminated flap. Acts as a genome stabilization factor that prevents flaps from equilibrating into structures that lead to duplications and deletions. Also possesses 5'-3' exonuclease activity on nicked or gapped double-stranded DNA, and exhibits RNase H activity. Also involved in replication and repair of rDNA and in repairing mitochondrial DNA. In Trypanosoma brucei brucei (strain 927/4 GUTat10.1), this protein is Flap endonuclease 1.